The sequence spans 196 residues: MTELAPKQITYCGVCTWPLEFCEFGISLPRCQSWLASKHPELFSTVYPNTPNPESVSASAPSADELASKLELATLSSDPKEAKIQAELLKKQAKHQLKQEKELTKKQNSKIIIKRIERNKRKHIISISGLEVFQIEPKKLAKTFASKFATGASVVKNAEKLDEVVVQGDVSDEAKEYIEKLLKEQEGLENVKVEPS.

Residues 111-182 (IIIKRIERNK…EAKEYIEKLL (72 aa)) enclose the SUI1 domain.

It belongs to the DENR family. In terms of assembly, interacts with the 40S ribosomal subunit.

It localises to the cytoplasm. This Lodderomyces elongisporus (strain ATCC 11503 / CBS 2605 / JCM 1781 / NBRC 1676 / NRRL YB-4239) (Yeast) protein is Translation machinery-associated protein 22 (TMA22).